The chain runs to 380 residues: Guanine nucleotide-binding protein alpha-1 subunit (380 aa).

A disordered region spans residues methionine 1 to isoleucine 25. The N-myristoyl glycine moiety is linked to residue glycine 2. Cysteine 5 carries the S-palmitoyl cysteine lipid modification. Over residues serine 10–isoleucine 25 the composition is skewed to basic and acidic residues. The 343-residue stretch at histidine 38–threonine 380 folds into the G-alpha domain. The segment at lysine 41–threonine 54 is G1 motif. Glutamate 49, serine 50, glycine 51, lysine 52, serine 53, threonine 54, aspartate 163, leucine 188, tyrosine 189, threonine 194, glycine 222, asparagine 288, lysine 289, aspartate 291, and alanine 356 together coordinate GTP. Serine 53 lines the Mg(2+) pocket. The tract at residues aspartate 186–threonine 194 is G2 motif. Threonine 194 serves as a coordination point for Mg(2+). Residues tyrosine 215–arginine 224 form a G3 motif region. The segment at isoleucine 284 to aspartate 291 is G4 motif. Residues threonine 354–glutamine 359 are G5 motif.

The protein belongs to the G-alpha family. G proteins are composed of 3 units; alpha, beta and gamma. The alpha chain contains the guanine nucleotide binding site. Interacts with COLD1. Requires Mg(2+) as cofactor.

It is found in the cell membrane. Its function is as follows. Guanine nucleotide-binding proteins (G proteins) are involved as modulators or transducers in various transmembrane signaling systems. May function in a signal transduction pathway required for normal growth and development of internodes, leaves, panicles and seeds. Involved in gibberellin signal transduction. Involved in R gene-mediated disease resistance. Functions upstream of the small GTPase RAC1 in the early steps of signaling. Involved in brassinosteroid response. May not be a signaling molecule in BRI1-mediated perception or transduction. The polypeptide is Guanine nucleotide-binding protein alpha-1 subunit (GPA1) (Oryza sativa subsp. indica (Rice)).